Consider the following 277-residue polypeptide: Inner kinetochore subunit sim4 (277 aa).

The stretch at 96–138 (NNISDLKKNLHSNKKLEAVLKEELHQIKKFSSDLQSLKSSMGE) forms a coiled coil.

Belongs to the CENP-K/MCM22 family. As to quaternary structure, component of the inner kinetochore constitutive centromere-associated network (CCAN) (also known as central kinetochore Sim4 complex in fission yeast), which is composed of at least cnl2, cnp3, cnp20, fta1, fta2, fta3, fta4, fta6, fta7, mal2, mhf1, mhf2, mis6, mis15, mis17, sim4 and wip1. Interacts with mis6 and dad1.

It localises to the nucleus. The protein localises to the chromosome. It is found in the centromere. Functionally, component of the kinetochore, a multiprotein complex that assembles on centromeric DNA and attaches chromosomes to spindle microtubules, mediating chromosome segregation and sister chromatid segregation during meiosis and mitosis. Component of the inner kinetochore constitutive centromere-associated network (CCAN), which serves as a structural platform for outer kinetochore assembly. This Schizosaccharomyces pombe (strain 972 / ATCC 24843) (Fission yeast) protein is Inner kinetochore subunit sim4 (sim4).